A 333-amino-acid polypeptide reads, in one-letter code: tRNA(Ile)-lysidine synthase (333 aa).

Residue 25-30 participates in ATP binding; the sequence is SGGPDS.

It belongs to the tRNA(Ile)-lysidine synthase family.

Its subcellular location is the cytoplasm. The enzyme catalyses cytidine(34) in tRNA(Ile2) + L-lysine + ATP = lysidine(34) in tRNA(Ile2) + AMP + diphosphate + H(+). Ligates lysine onto the cytidine present at position 34 of the AUA codon-specific tRNA(Ile) that contains the anticodon CAU, in an ATP-dependent manner. Cytidine is converted to lysidine, thus changing the amino acid specificity of the tRNA from methionine to isoleucine. This chain is tRNA(Ile)-lysidine synthase, found in Ureaplasma parvum serovar 3 (strain ATCC 700970).